Reading from the N-terminus, the 261-residue chain is High-affinity zinc uptake system membrane protein ZnuB (261 aa).

Transmembrane regions (helical) follow at residues 5-27 (FFFG…LFII), 48-70 (FAVL…FGML), 85-107 (ILGI…ISNF), 128-150 (IVIL…DLML), 172-194 (ILIF…LIAI), 215-234 (AFFS…LMSV), and 238-257 (LAIS…ISNL).

Belongs to the ABC-3 integral membrane protein family.

Its subcellular location is the cell membrane. In terms of biological role, involved in the high-affinity zinc uptake transport system. The sequence is that of High-affinity zinc uptake system membrane protein ZnuB (znuB) from Buchnera aphidicola subsp. Baizongia pistaciae (strain Bp).